Consider the following 331-residue polypeptide: Biotin synthase (331 aa).

The Radical SAM core domain occupies 51-278 (QTIQLSTLMS…KSYVRLSAGR (228 aa)). The [4Fe-4S] cluster site is built by Cys-66, Cys-70, and Cys-73. Residues Cys-110, Cys-141, Cys-201, and Arg-273 each coordinate [2Fe-2S] cluster.

The protein belongs to the radical SAM superfamily. Biotin synthase family. Homodimer. Requires [4Fe-4S] cluster as cofactor. [2Fe-2S] cluster serves as cofactor.

It carries out the reaction (4R,5S)-dethiobiotin + (sulfur carrier)-SH + 2 reduced [2Fe-2S]-[ferredoxin] + 2 S-adenosyl-L-methionine = (sulfur carrier)-H + biotin + 2 5'-deoxyadenosine + 2 L-methionine + 2 oxidized [2Fe-2S]-[ferredoxin]. Its pathway is cofactor biosynthesis; biotin biosynthesis; biotin from 7,8-diaminononanoate: step 2/2. Its function is as follows. Catalyzes the conversion of dethiobiotin (DTB) to biotin by the insertion of a sulfur atom into dethiobiotin via a radical-based mechanism. In Histophilus somni (strain 129Pt) (Haemophilus somnus), this protein is Biotin synthase.